Consider the following 167-residue polypeptide: DNA-directed RNA polymerase II subunit rpb-9 (167 aa).

The segment at 28–49 (DDMYDQNGASPAPSQNEKPGKS) is disordered. Polar residues predominate over residues 34–44 (NGASPAPSQNE). Residues cysteine 59, cysteine 62, cysteine 81, cysteine 84, cysteine 128, cysteine 131, cysteine 156, and cysteine 161 each contribute to the Zn(2+) site. The C4-type zinc-finger motif lies at 59 to 84 (CPECNNMLYPREDKESRVLMYSCRNC). Residues 124–166 (EEHQCPVCGKSKAVFFQAQTKKAEEEMRLYYVCASQDCQHRWT) form a TFIIS-type zinc finger.

This sequence belongs to the archaeal RpoM/eukaryotic RPA12/RPB9/RPC11 RNA polymerase family. In terms of assembly, component of the RNA polymerase II (Pol II) complex consisting of 12 subunits. In terms of tissue distribution, expressed in the soma and in the germline.

Its subcellular location is the nucleus. It localises to the nucleolus. Its function is as follows. DNA-dependent RNA polymerase catalyzes the transcription of DNA into RNA using the four ribonucleoside triphosphates as substrates. Component of RNA polymerase II which synthesizes mRNA precursors and many functional non-coding RNAs. Pol II is the central component of the basal RNA polymerase II transcription machinery. It is composed of mobile elements that move relative to each other. RPB9 is part of the upper jaw surrounding the central large cleft and thought to grab the incoming DNA template. Recruits ints-6, a component of the Integrator complex to PIWI-interacting RNA (piRNA) genes, to mediate Integrator complex-dependent cleavage of 3' ends of nascent transcripts upon RNA Pol II backtracking to terminate transcription and generate piRNA precursors. Promotes the biogenesis of secondary 22G-siRNAs (a class of 22 nucleotide siRNAs that possess a triphosphorylated guanine residue at the 5'-end). Involved in gene silencing mediated by a class of 21 nucleotide piRNAs that possess a uracil residue at the 5'-end (also called 21U-RNAs) and guide the Piwi protein prg-1 to its DNA targets for silencing. Plays a role in small RNA-directed transgenerational epigenetic inheritance (also called RNAe) over several generations. Not required for the transgenerational inheritance of exogenous small interfering RNAs (RNAi). May play a role in the silencing of the DNA transposable elements from the DNA transposon families, Chapaev-2 and CEMUDR1. The polypeptide is DNA-directed RNA polymerase II subunit rpb-9 (Caenorhabditis elegans).